Consider the following 263-residue polypeptide: Small ribosomal subunit protein uS3 (263 aa).

A KH type-2 domain is found at 39-107 (VREYLKKKLK…PVHVNIEEIR (69 aa)). The interval 211–263 (GELPPEAATPREEERRPRRAPRGDRPDGARTGRPGGRGRGPRKADAAPAPEGE) is disordered. The span at 219–240 (TPREEERRPRRAPRGDRPDGAR) shows a compositional bias: basic and acidic residues.

It belongs to the universal ribosomal protein uS3 family. As to quaternary structure, part of the 30S ribosomal subunit. Forms a tight complex with proteins S10 and S14.

Its function is as follows. Binds the lower part of the 30S subunit head. Binds mRNA in the 70S ribosome, positioning it for translation. This is Small ribosomal subunit protein uS3 from Bordetella pertussis (strain Tohama I / ATCC BAA-589 / NCTC 13251).